Consider the following 180-residue polypeptide: Acireductone dioxygenase (180 aa).

Residues histidine 99, histidine 101, glutamate 105, and histidine 145 each contribute to the Fe(2+) site. 4 residues coordinate Ni(2+): histidine 99, histidine 101, glutamate 105, and histidine 145.

It belongs to the acireductone dioxygenase (ARD) family. As to quaternary structure, monomer. It depends on Fe(2+) as a cofactor. Ni(2+) serves as cofactor.

The enzyme catalyses 1,2-dihydroxy-5-(methylsulfanyl)pent-1-en-3-one + O2 = 3-(methylsulfanyl)propanoate + CO + formate + 2 H(+). It catalyses the reaction 1,2-dihydroxy-5-(methylsulfanyl)pent-1-en-3-one + O2 = 4-methylsulfanyl-2-oxobutanoate + formate + 2 H(+). Its pathway is amino-acid biosynthesis; L-methionine biosynthesis via salvage pathway; L-methionine from S-methyl-5-thio-alpha-D-ribose 1-phosphate: step 5/6. Its function is as follows. Catalyzes 2 different reactions between oxygen and the acireductone 1,2-dihydroxy-3-keto-5-methylthiopentene (DHK-MTPene) depending upon the metal bound in the active site. Fe-containing acireductone dioxygenase (Fe-ARD) produces formate and 2-keto-4-methylthiobutyrate (KMTB), the alpha-ketoacid precursor of methionine in the methionine recycle pathway. Ni-containing acireductone dioxygenase (Ni-ARD) produces methylthiopropionate, carbon monoxide and formate, and does not lie on the methionine recycle pathway. The sequence is that of Acireductone dioxygenase from Geobacillus thermodenitrificans (strain NG80-2).